The chain runs to 445 residues: Xylose isomerase (445 aa).

Residues His107 and Asp110 contribute to the active site. Mg(2+)-binding residues include Glu238, Glu274, His277, Asp302, Asp313, Asp315, and Asp345.

This sequence belongs to the xylose isomerase family. As to quaternary structure, homotetramer. The cofactor is Mg(2+).

Its subcellular location is the cytoplasm. It catalyses the reaction alpha-D-xylose = alpha-D-xylulofuranose. The sequence is that of Xylose isomerase (xylA) from Bacillus spizizenii (strain ATCC 23059 / NRRL B-14472 / W23) (Bacillus subtilis subsp. spizizenii).